The primary structure comprises 367 residues: MAELQQLQQLQEFDIPTGREALRGNHSALLRVANYCEDNYLQATDKRKALEETMAFTTQALASVAYQVGNLAGHTLRMLDLQGAALRQVEAKMSTLGQMVNMHMEKVARREIGTLATVVRLPSNQKVIPPESLPSLTPYHRKPLNFACLDDIGHGVKDLSTQLSRTGTLSRKSIKAPATPVSATLGRPPRIPEPVQLPAVPDGKLSAASSASSLASAGSAEGASGIPQSKGQVAPATPPPPPVAPVTPPPPPLSAEVFLPPPPLEVSQPPLEAELPLPPPPALEGDELGLLPPPPPGFGPDEPSWVPASYLEKVVTLYPYTRQKDNELSFSEGTVICVTRRYSDGWCEGVSSEGTGFFPGNYVEPSC.

Residues 36 to 64 (CEDNYLQATDKRKALEETMAFTTQALASV) adopt a coiled-coil conformation. The disordered stretch occupies residues 163 to 273 (LSRTGTLSRK…LEVSQPPLEA (111 aa)). Over residues 206–225 (SAASSASSLASAGSAEGASG) the composition is skewed to low complexity. A phosphoserine mark is found at Ser216 and Ser219. The segment covering 236–264 (ATPPPPPVAPVTPPPPPLSAEVFLPPPPL) has biased composition (pro residues). The SH3 domain maps to 309–367 (SYLEKVVTLYPYTRQKDNELSFSEGTVICVTRRYSDGWCEGVSSEGTGFFPGNYVEPSC). The residue at position 343 (Ser343) is a Phosphoserine.

Belongs to the ABI family. May interact with PAK1 and PAK2. Probably interacts with TARSH.

The protein localises to the cytoplasm. Functionally, inhibits ectopic tumor cell metastasis of SRD cells. In vitro, reduces cell motility. This Mus musculus (Mouse) protein is ABI gene family member 3 (Abi3).